We begin with the raw amino-acid sequence, 465 residues long: Cysteine--tRNA ligase (465 aa).

Cys27 is a binding site for Zn(2+). The short motif at 29–39 (PTVYDDAHLGH) is the 'HIGH' region element. Positions 207, 237, and 241 each coordinate Zn(2+). The 'KMSKS' region motif lies at 269–273 (KMSKS). Lys272 contributes to the ATP binding site.

Belongs to the class-I aminoacyl-tRNA synthetase family. Monomer. Zn(2+) serves as cofactor.

Its subcellular location is the cytoplasm. The catalysed reaction is tRNA(Cys) + L-cysteine + ATP = L-cysteinyl-tRNA(Cys) + AMP + diphosphate. This is Cysteine--tRNA ligase (cysS) from Helicobacter pylori (strain ATCC 700392 / 26695) (Campylobacter pylori).